The sequence spans 320 residues: Cytochrome f (320 aa).

Positions methionine 1–alanine 35 are cleaved as a signal peptide. The heme site is built by tyrosine 36, cysteine 56, cysteine 59, and histidine 60. A helical membrane pass occupies residues valine 286 to lysine 306.

This sequence belongs to the cytochrome f family. In terms of assembly, the 4 large subunits of the cytochrome b6-f complex are cytochrome b6, subunit IV (17 kDa polypeptide, petD), cytochrome f and the Rieske protein, while the 4 small subunits are PetG, PetL, PetM and PetN. The complex functions as a dimer. It depends on heme as a cofactor.

It is found in the plastid. The protein resides in the chloroplast thylakoid membrane. Functionally, component of the cytochrome b6-f complex, which mediates electron transfer between photosystem II (PSII) and photosystem I (PSI), cyclic electron flow around PSI, and state transitions. This chain is Cytochrome f, found in Lobularia maritima (Sweet alyssum).